The sequence spans 957 residues: Glycine dehydrogenase (decarboxylating) (957 aa).

Lys708 carries the N6-(pyridoxal phosphate)lysine modification.

This sequence belongs to the GcvP family. In terms of assembly, the glycine cleavage system is composed of four proteins: P, T, L and H. Pyridoxal 5'-phosphate is required as a cofactor.

The enzyme catalyses N(6)-[(R)-lipoyl]-L-lysyl-[glycine-cleavage complex H protein] + glycine + H(+) = N(6)-[(R)-S(8)-aminomethyldihydrolipoyl]-L-lysyl-[glycine-cleavage complex H protein] + CO2. The glycine cleavage system catalyzes the degradation of glycine. The P protein binds the alpha-amino group of glycine through its pyridoxal phosphate cofactor; CO(2) is released and the remaining methylamine moiety is then transferred to the lipoamide cofactor of the H protein. The sequence is that of Glycine dehydrogenase (decarboxylating) from Cronobacter sakazakii (strain ATCC BAA-894) (Enterobacter sakazakii).